Here is a 150-residue protein sequence, read N- to C-terminus: Cell division protein SepF (150 aa).

It belongs to the SepF family. Homodimer. Interacts with FtsZ.

It localises to the cytoplasm. Cell division protein that is part of the divisome complex and is recruited early to the Z-ring. Probably stimulates Z-ring formation, perhaps through the cross-linking of FtsZ protofilaments. Its function overlaps with FtsA. This chain is Cell division protein SepF, found in Clostridium botulinum (strain ATCC 19397 / Type A).